A 120-amino-acid polypeptide reads, in one-letter code: MTALLTAVGAAFGALLRYCLNCAAAARGTTGFPWGTWCVNTLGCLLAGALAALPLPAAVAALAGPGLCGGLTTYSTFSYETVRLLAERKWTHALGNIGANLAAGVGAAVLGMAAVGWFLR.

The next 2 membrane-spanning stretches (helical) occupy residues 3–23 (ALLTAVGAAFGALLRYCLNCA) and 42–62 (LGCLLAGALAALPLPAAVAAL). Residues Gly69 and Thr72 each contribute to the Na(+) site. The helical transmembrane segment at 99-119 (ANLAAGVGAAVLGMAAVGWFL) threads the bilayer.

It belongs to the fluoride channel Fluc/FEX (TC 1.A.43) family.

It is found in the cell membrane. The enzyme catalyses fluoride(in) = fluoride(out). Na(+) is not transported, but it plays an essential structural role and its presence is essential for fluoride channel function. In terms of biological role, fluoride-specific ion channel. Important for reducing fluoride concentration in the cell, thus reducing its toxicity. The polypeptide is Fluoride-specific ion channel FluC 1 (Thermobifida fusca (strain YX)).